The sequence spans 258 residues: Type III pantothenate kinase (258 aa).

6-13 (DVGNTNTV) is an ATP binding site. Residues Y100 and 107 to 110 (GADR) contribute to the substrate site. D109 acts as the Proton acceptor in catalysis. Residue D129 coordinates K(+). T132 is an ATP binding site. A substrate-binding site is contributed by T184.

It belongs to the type III pantothenate kinase family. As to quaternary structure, homodimer. NH4(+) is required as a cofactor. The cofactor is K(+).

The protein localises to the cytoplasm. It catalyses the reaction (R)-pantothenate + ATP = (R)-4'-phosphopantothenate + ADP + H(+). Its pathway is cofactor biosynthesis; coenzyme A biosynthesis; CoA from (R)-pantothenate: step 1/5. Catalyzes the phosphorylation of pantothenate (Pan), the first step in CoA biosynthesis. The sequence is that of Type III pantothenate kinase from Geobacillus kaustophilus (strain HTA426).